The chain runs to 137 residues: Large ribosomal subunit protein uL16 (137 aa).

The span at 1–17 (MLQPKRTKFRKQQKGRN) shows a compositional bias: basic residues. The disordered stretch occupies residues 1–24 (MLQPKRTKFRKQQKGRNRGLAQSG).

The protein belongs to the universal ribosomal protein uL16 family. In terms of assembly, part of the 50S ribosomal subunit.

Binds 23S rRNA and is also seen to make contacts with the A and possibly P site tRNAs. The polypeptide is Large ribosomal subunit protein uL16 (Dichelobacter nodosus (strain VCS1703A)).